We begin with the raw amino-acid sequence, 420 residues long: Putative sporulation-specific glycosylase YdhD (420 aa).

LysM domains follow at residues 2-45 (FIHI…ALLI) and 48-92 (YVYT…KITI). The 321-residue stretch at 100-420 (AGTLSFYVLR…LRKFFTIRKV (321 aa)) folds into the GH18 domain. Residue Glu212 is the Proton donor of the active site.

This sequence belongs to the glycosyl hydrolase 18 family. Chitinase class II subfamily.

The protein localises to the spore wall. This Bacillus subtilis (strain 168) protein is Putative sporulation-specific glycosylase YdhD (ydhD).